The chain runs to 302 residues: uncharacterized protein (302 aa).

Disordered regions lie at residues 81 to 100 (ETSD…ERAA), 155 to 209 (TVTG…PVNP), and 269 to 302 (LRIE…ALLN). Over residues 196-209 (PSLPSSLVSSPVNP) the composition is skewed to low complexity.

This is an uncharacterized protein from Ictalurid herpesvirus 1 (strain Auburn) (IcHV-1).